Consider the following 187-residue polypeptide: Ribosome-recycling factor (187 aa).

Belongs to the RRF family.

The protein localises to the cytoplasm. Responsible for the release of ribosomes from messenger RNA at the termination of protein biosynthesis. May increase the efficiency of translation by recycling ribosomes from one round of translation to another. The chain is Ribosome-recycling factor from Ligilactobacillus salivarius (strain UCC118) (Lactobacillus salivarius).